Here is a 206-residue protein sequence, read N- to C-terminus: uncharacterized protein (206 aa).

In terms of domain architecture, Nudix hydrolase spans Y29 to V169. A Nudix box motif is present at residues A69–G90. The Mg(2+) site is built by E84 and E88.

This sequence belongs to the Nudix hydrolase family. It depends on Mg(2+) as a cofactor.

This is an uncharacterized protein from Clostridium acetobutylicum (strain ATCC 824 / DSM 792 / JCM 1419 / IAM 19013 / LMG 5710 / NBRC 13948 / NRRL B-527 / VKM B-1787 / 2291 / W).